Here is a 440-residue protein sequence, read N- to C-terminus: Argininosuccinate lyase (440 aa).

Belongs to the lyase 1 family. Argininosuccinate lyase subfamily.

The protein resides in the cytoplasm. It catalyses the reaction 2-(N(omega)-L-arginino)succinate = fumarate + L-arginine. It participates in amino-acid biosynthesis; L-arginine biosynthesis; L-arginine from L-ornithine and carbamoyl phosphate: step 3/3. This chain is Argininosuccinate lyase, found in Clostridium botulinum (strain ATCC 19397 / Type A).